The primary structure comprises 525 residues: GMP synthase [glutamine-hydrolyzing] (525 aa).

The Glutamine amidotransferase type-1 domain maps to 8–207 (KILILDFGSQ…ALDICGCAAN (200 aa)). Catalysis depends on cysteine 85, which acts as the Nucleophile. Catalysis depends on residues histidine 181 and glutamate 183. The 193-residue stretch at 208–400 (WKPSSIIEDA…LGLPYNMLYR (193 aa)) folds into the GMPS ATP-PPase domain. 235–241 (SGGVDSS) serves as a coordination point for ATP.

Homodimer.

The catalysed reaction is XMP + L-glutamine + ATP + H2O = GMP + L-glutamate + AMP + diphosphate + 2 H(+). It participates in purine metabolism; GMP biosynthesis; GMP from XMP (L-Gln route): step 1/1. Functionally, catalyzes the synthesis of GMP from XMP. The chain is GMP synthase [glutamine-hydrolyzing] from Shewanella baltica (strain OS223).